The sequence spans 623 residues: uncharacterized protein (623 aa).

Helical transmembrane passes span 242–262, 288–308, 318–338, 361–381, and 387–407; these read IALALMILALLLGLRKLITWL, IVSPVSVFLALFSCDVALDIF, VSMWVGAVYIMLLAWLVIALF, VINLILKVVYFLIFIVALLGV, and FNVSAIIASLGIGGLAVALAV.

It belongs to the MscS (TC 1.A.23) family.

The protein localises to the cell membrane. This is an uncharacterized protein from Helicobacter pylori (strain J99 / ATCC 700824) (Campylobacter pylori J99).